Consider the following 98-residue polypeptide: NADH-ubiquinone oxidoreductase chain 4L (98 aa).

Helical transmembrane passes span 1 to 21 (MMSI…GVLI), 28 to 48 (STLL…ALLI), and 59 to 79 (APLI…ALLV).

This sequence belongs to the complex I subunit 4L family. In terms of assembly, core subunit of respiratory chain NADH dehydrogenase (Complex I) which is composed of 45 different subunits.

The protein resides in the mitochondrion inner membrane. It carries out the reaction a ubiquinone + NADH + 5 H(+)(in) = a ubiquinol + NAD(+) + 4 H(+)(out). In terms of biological role, core subunit of the mitochondrial membrane respiratory chain NADH dehydrogenase (Complex I) which catalyzes electron transfer from NADH through the respiratory chain, using ubiquinone as an electron acceptor. Part of the enzyme membrane arm which is embedded in the lipid bilayer and involved in proton translocation. In Lagorchestes hirsutus (Rufous hare-wallaby), this protein is NADH-ubiquinone oxidoreductase chain 4L (MT-ND4L).